We begin with the raw amino-acid sequence, 242 residues long: Small ribosomal subunit protein uS7m (242 aa).

The transit peptide at 1–37 directs the protein to the mitochondrion; that stretch reads MAAPALRAPLRWSGLALGVRCAVWNLPGLTQVRGSRY. K228 is subject to N6-acetyllysine.

It belongs to the universal ribosomal protein uS7 family. As to quaternary structure, component of the mitochondrial ribosome small subunit (28S) which comprises a 12S rRNA and about 30 distinct proteins.

The protein localises to the mitochondrion. This is Small ribosomal subunit protein uS7m (Mrps7) from Mus musculus (Mouse).